The chain runs to 283 residues: Phosphatidylglycerol--prolipoprotein diacylglyceryl transferase (283 aa).

Transmembrane regions (helical) follow at residues 21 to 41 (IEVH…FYMA), 62 to 82 (YFLW…ILIY), 106 to 126 (FIGI…IASY), 136 to 156 (LLIY…FGRI), 190 to 210 (PSQL…VMWA), 218 to 238 (GLLI…AEFY), and 252 to 272 (LSMG…ILLY). Arg-155 lines the a 1,2-diacyl-sn-glycero-3-phospho-(1'-sn-glycerol) pocket.

It belongs to the Lgt family.

The protein localises to the cell inner membrane. The enzyme catalyses L-cysteinyl-[prolipoprotein] + a 1,2-diacyl-sn-glycero-3-phospho-(1'-sn-glycerol) = an S-1,2-diacyl-sn-glyceryl-L-cysteinyl-[prolipoprotein] + sn-glycerol 1-phosphate + H(+). It participates in protein modification; lipoprotein biosynthesis (diacylglyceryl transfer). Its function is as follows. Catalyzes the transfer of the diacylglyceryl group from phosphatidylglycerol to the sulfhydryl group of the N-terminal cysteine of a prolipoprotein, the first step in the formation of mature lipoproteins. The chain is Phosphatidylglycerol--prolipoprotein diacylglyceryl transferase from Helicobacter acinonychis (strain Sheeba).